A 1713-amino-acid chain; its full sequence is uncharacterized protein (1713 aa).

The span at 1–12 shows a compositional bias: polar residues; it reads MNENEFSTNSLI. 7 disordered regions span residues 1–35, 79–200, 226–290, 309–557, 713–734, 808–952, and 1143–1190; these read MNEN…INFG, QQLN…KLSN, GNNN…QPLS, QYLS…PMSH, SNDQ…KKDR, SPPM…SITT, and HHHH…SISR. 5 stretches are compositionally biased toward low complexity: residues 13–35, 79–109, 126–170, 177–200, and 226–264; these read NQQG…INFG, QQLN…NNNN, NNSG…NSGN, NMSD…KLSN, and GNNN…GGNN. Residues 265–276 show a composition bias toward basic residues; that stretch reads SHHHHNHSHHNS. 2 stretches are compositionally biased toward low complexity: residues 317–470 and 478–489; these read NNIN…SPAS and SNNFGGNHNNYN. The segment covering 490–504 has biased composition (basic residues); the sequence is HAHHSHHNNHAHHNT. Residues 505–553 are compositionally biased toward low complexity; sequence HNYNNNNNNNNNNNNNNNNNNNNSNNSNNNSNTNNNGNNGNNSNNNNNH. Residues 544–825 constitute a DNA-binding region (NDT80); that stretch reads GNNSNNNNNH…QNPGRFLNHD (282 aa). Over residues 822 to 832 the composition is skewed to basic and acidic residues; sequence LNHDKSLKKDP. A compositionally biased stretch (gly residues) spans 838 to 874; sequence GGKGGGGSGSGGMGGGMGGGMGNNGSSGSSSNGGYGN. 2 stretches are compositionally biased toward low complexity: residues 898–946 and 1148–1189; these read SPTT…PTLT and QQQQ…SSIS. The Peptidase S74 domain maps to 1240-1355; that stretch reads SDQRIKSNIR…RSLKKEKDHI (116 aa). 3 helical membrane-spanning segments follow: residues 1416–1436, 1447–1467, and 1473–1493; these read TMFV…FYLF, LMNF…TFYV, and LIIA…VGFF. Positions 1596 to 1605 are enriched in low complexity; the sequence is NSNNNINNNN. Disordered stretches follow at residues 1596–1634 and 1646–1665; these read NSNN…DFHE and IKGK…SSSN. Basic and acidic residues predominate over residues 1617 to 1634; sequence FIDDFKKSSSNNHKDFHE.

The protein resides in the membrane. This is an uncharacterized protein from Dictyostelium discoideum (Social amoeba).